The following is a 368-amino-acid chain: Nuclease EXOG, mitochondrial (368 aa).

The N-terminal 41 residues, 1 to 41 (MAIKSIASRLRGSRRFLSGFVAGAVVGAAGAGLAALQFFRS), are a transit peptide targeting the mitochondrion. The active-site Proton acceptor is the histidine 140. Residue asparagine 171 coordinates a divalent metal cation.

Belongs to the DNA/RNA non-specific endonuclease family. As to quaternary structure, homodimer. A divalent metal cation serves as cofactor. Ubiquitous.

The protein localises to the mitochondrion inner membrane. Functionally, endo/exonuclease with nicking activity towards supercoiled DNA, a preference for single-stranded DNA and 5'-3' exonuclease activity. The polypeptide is Nuclease EXOG, mitochondrial (EXOG) (Homo sapiens (Human)).